A 176-amino-acid chain; its full sequence is uncharacterized protein (176 aa).

This is an uncharacterized protein from Treponema pallidum (strain Nichols).